Consider the following 1154-residue polypeptide: Coiled-coil domain-containing protein 136 (1154 aa).

The disordered stretch occupies residues 1-48 (MQAMEGEVLLPALYEEEEEEEEEEEEVEEEEEQVQKGGSVGSLSVNKH). Residues 14 to 32 (YEEEEEEEEEEEEVEEEEE) show a composition bias toward acidic residues. At Ser-52 the chain carries Phosphoserine. Coiled-coil stretches lie at residues 696–733 (QAKQ…LQVQ) and 859–974 (KLQA…RPSV). A compositionally biased stretch (basic and acidic residues) spans 1031 to 1058 (DGLAKEEEKKEEMEEEKKQVKEEAKEQC). The tract at residues 1031 to 1131 (DGLAKEEEKK…SSPTPNPPIF (101 aa)) is disordered. Residues 1077–1109 (DQEENEEDKEEEEKEEDSEEEEDDADSSLESPE) are compositionally biased toward acidic residues. The chain crosses the membrane as a helical span at residues 1130–1150 (IFSLPLVGLVVISALLWCWWA).

As to expression, expressed in gastric tissues. Down-regulated in gastric cancer.

Its subcellular location is the cytoplasmic vesicle. The protein resides in the secretory vesicle. The protein localises to the acrosome membrane. Its function is as follows. May play a role in acrosome formation in spermatogenesis and in fertilization. This Homo sapiens (Human) protein is Coiled-coil domain-containing protein 136 (CCDC136).